The primary structure comprises 366 residues: Cobalt-precorrin-5B C(1)-methyltransferase (366 aa).

Belongs to the CbiD family.

The catalysed reaction is Co-precorrin-5B + S-adenosyl-L-methionine = Co-precorrin-6A + S-adenosyl-L-homocysteine. The protein operates within cofactor biosynthesis; adenosylcobalamin biosynthesis; cob(II)yrinate a,c-diamide from sirohydrochlorin (anaerobic route): step 6/10. Functionally, catalyzes the methylation of C-1 in cobalt-precorrin-5B to form cobalt-precorrin-6A. The chain is Cobalt-precorrin-5B C(1)-methyltransferase from Hahella chejuensis (strain KCTC 2396).